The primary structure comprises 404 residues: 1-deoxy-D-xylulose 5-phosphate reductoisomerase (404 aa).

NADPH contacts are provided by Thr-5, Gly-6, Ser-7, Ile-8, Gly-31, Arg-32, Asn-33, and Asn-121. Lys-122 contacts 1-deoxy-D-xylulose 5-phosphate. Residue Glu-123 participates in NADPH binding. Asp-147 provides a ligand contact to Mn(2+). 1-deoxy-D-xylulose 5-phosphate contacts are provided by Ser-148, Glu-149, Ser-185, and His-208. Residue Glu-149 coordinates Mn(2+). Residue Gly-214 participates in NADPH binding. Ser-221, Asn-226, Lys-227, and Glu-230 together coordinate 1-deoxy-D-xylulose 5-phosphate. Glu-230 provides a ligand contact to Mn(2+).

This sequence belongs to the DXR family. Mg(2+) is required as a cofactor. The cofactor is Mn(2+).

It carries out the reaction 2-C-methyl-D-erythritol 4-phosphate + NADP(+) = 1-deoxy-D-xylulose 5-phosphate + NADPH + H(+). The protein operates within isoprenoid biosynthesis; isopentenyl diphosphate biosynthesis via DXP pathway; isopentenyl diphosphate from 1-deoxy-D-xylulose 5-phosphate: step 1/6. In terms of biological role, catalyzes the NADPH-dependent rearrangement and reduction of 1-deoxy-D-xylulose-5-phosphate (DXP) to 2-C-methyl-D-erythritol 4-phosphate (MEP). The sequence is that of 1-deoxy-D-xylulose 5-phosphate reductoisomerase from Prochlorococcus marinus subsp. pastoris (strain CCMP1986 / NIES-2087 / MED4).